The following is a 617-amino-acid chain: Chaperone protein HscA homolog (617 aa).

The protein belongs to the heat shock protein 70 family.

In terms of biological role, chaperone involved in the maturation of iron-sulfur cluster-containing proteins. Has a low intrinsic ATPase activity which is markedly stimulated by HscB. This is Chaperone protein HscA homolog from Aliivibrio salmonicida (strain LFI1238) (Vibrio salmonicida (strain LFI1238)).